Here is a 121-residue protein sequence, read N- to C-terminus: MARIAGVDIPRDKRVVISLTYIYGIGKPTAQKILKEAGVSEDTRVRDLTEEELGRIREIVGRLKVEGDLRREVSLNIKRLMEIGCYRGLRHRRGLPVRGQNTKNNARTRKGPRRTVANKKK.

A disordered region spans residues 94-121 (GLPVRGQNTKNNARTRKGPRRTVANKKK). The segment covering 106–121 (ARTRKGPRRTVANKKK) has biased composition (basic residues).

It belongs to the universal ribosomal protein uS13 family. In terms of assembly, part of the 30S ribosomal subunit. Forms a loose heterodimer with protein S19. Forms two bridges to the 50S subunit in the 70S ribosome.

Functionally, located at the top of the head of the 30S subunit, it contacts several helices of the 16S rRNA. In the 70S ribosome it contacts the 23S rRNA (bridge B1a) and protein L5 of the 50S subunit (bridge B1b), connecting the 2 subunits; these bridges are implicated in subunit movement. Contacts the tRNAs in the A and P-sites. The sequence is that of Small ribosomal subunit protein uS13 from Geobacillus kaustophilus (strain HTA426).